The sequence spans 370 residues: Glutamate 5-kinase (370 aa).

Lysine 17 contacts ATP. The substrate site is built by serine 57, aspartate 144, and asparagine 156. Residues 176–177 and 220–226 each bind ATP; these read SD and TGGMASK. Positions 282–360 constitute a PUA domain; sequence AGALTLDDGA…HELPVEMRRP (79 aa).

It belongs to the glutamate 5-kinase family.

The protein localises to the cytoplasm. It catalyses the reaction L-glutamate + ATP = L-glutamyl 5-phosphate + ADP. It participates in amino-acid biosynthesis; L-proline biosynthesis; L-glutamate 5-semialdehyde from L-glutamate: step 1/2. Functionally, catalyzes the transfer of a phosphate group to glutamate to form L-glutamate 5-phosphate. The polypeptide is Glutamate 5-kinase (Mycolicibacterium smegmatis (strain ATCC 700084 / mc(2)155) (Mycobacterium smegmatis)).